A 33-amino-acid chain; its full sequence is Pardaxin P-1 (33 aa).

The protein belongs to the pardaxin family. In aqueous solution exists as a tetramer.

It is found in the secreted. The protein localises to the target cell membrane. Its function is as follows. Exhibits unusual shark repellent and surfactant properties. Forms voltage-dependent, ion-permeable channels in membranes. At high concentration causes cell membrane lysis. Causes death in killfish oryzias latipes in 30 minutes at a concentration of 25 micrograms/ml. In Pardachirus pavoninus (Peacock sole), this protein is Pardaxin P-1.